A 277-amino-acid polypeptide reads, in one-letter code: tRNA uridine(34) hydroxylase (277 aa).

The Rhodanese domain occupies Ser126–Ser221. The Cysteine persulfide intermediate role is filled by Cys181.

It belongs to the TrhO family.

The enzyme catalyses uridine(34) in tRNA + AH2 + O2 = 5-hydroxyuridine(34) in tRNA + A + H2O. Functionally, catalyzes oxygen-dependent 5-hydroxyuridine (ho5U) modification at position 34 in tRNAs. This chain is tRNA uridine(34) hydroxylase, found in Anaplasma marginale (strain Florida).